The following is an 84-amino-acid chain: N.vectensis toxin 5 (84 aa).

Residues 1–21 (MNSLLKVAVVCLVMLVACSSG) form the signal peptide. Cystine bridges form between cysteine 45/cysteine 77, cysteine 47/cysteine 68, and cysteine 61/cysteine 78.

As to expression, expressed in ectodermal gland cells. In adult female tissues, highly transcribed in mesenteries (gametes-producing tissue) and slightly transcribed in tentacles, pharynx and physa.

Functionally, has toxic effects on zebrafish larvae. It causes contractile paralysis and twitching of the tail within 20 minutes, followed by death within 30 minutes. Does not show any toxicity when injected into arthropods (cherry shrimps or grass shrimps). This chain is N.vectensis toxin 5, found in Nematostella vectensis (Starlet sea anemone).